A 787-amino-acid chain; its full sequence is Transcriptional corepressor LEUNIG_HOMOLOG (787 aa).

Positions 1–88 (MAQSNWEADK…IEAQQGKAKE (88 aa)) are required for SEU-binding. The LisH domain occupies 8-40 (ADKMLDVYIYDYLVKKKLHNTAKSFMTEGKVSP). Residues 77-106 (AYIEAQQGKAKEQQMQIQQLQMMRQAQMQR) are a coiled coil. Positions 299-413 (NMTNSPMYGG…TPSTHTPVDG (115 aa)) are disordered. Low complexity-rich tracts occupy residues 336–346 (SIGSPMQSSSS) and 355–372 (QQSS…QSQQ). Over residues 380–409 (PSSSGPANSTGTGNTVGPSNSQPSTPSTHT) the composition is skewed to polar residues. WD repeat units lie at residues 508–547 (KSAS…VEST), 550–589 (EHAH…YFLR), 593–633 (GHAA…VRAV), 635–671 (GAST…KRVN), 675–715 (GHSS…HELS), 717–755 (SGNK…CMTV), and 757–787 (GHEC…KIWK).

Forms corepressor complexes with SLK1 and SLK2; LUH is the transcription repressor subunit and SLK1 and SLK2 the specific DNA-binding adapters. Interacts with SEU. Binds to YAB3, YAB5 and YAB1/FIL; these complexes promote adaxial cell identity in leaves as well as embryonic shoot apical meristem (SAM) initiation and postembryonic SAM maintenance. As to expression, expressed in roots, stems, leaves, seedlings, apex, flowers, siliques, flower organs and seeds (including seed coat).

It is found in the nucleus. Its function is as follows. Transcription repressor subunit of the SEU-SLK1 and SEU-SLK2 transcriptional corepressor of abiotic stress (e.g. salt and osmotic stress) response genes, by means of an epigenetic process involving histone modification (e.g. H3K9 and H3K14 acetylation), probably by recruiting HDAC, to facilitate the condensation of chromatin thus preventing transcription at the target genes. Can also act as a transcription activator. Implicated in embryo and floral development. Involved in post-synthesis cell wall modifications necessary for mucilage extrusion from seeds upon imbibition, probably by promoting the expression of genes required for mucilage maturation (e.g. MUM2). Regulates the maintenance on leaf polarity and meristem activity as well as the initiation of embryonic shoot apical meristem (SAM) development. The polypeptide is Transcriptional corepressor LEUNIG_HOMOLOG (Arabidopsis thaliana (Mouse-ear cress)).